A 696-amino-acid chain; its full sequence is Polyribonucleotide nucleotidyltransferase (696 aa).

The Mg(2+) site is built by Asp486 and Asp492. One can recognise a KH domain in the interval 553 to 612 (PRIIVRNIPKDRIGELIGPGGKNVRGISELTGAELYIEDDGRVTISGSNQESAEKAAKMV). The S1 motif domain maps to 622 to 690 (GKIYEGKVKR…KTGKIDLSRK (69 aa)).

Belongs to the polyribonucleotide nucleotidyltransferase family. Requires Mg(2+) as cofactor.

Its subcellular location is the cytoplasm. The enzyme catalyses RNA(n+1) + phosphate = RNA(n) + a ribonucleoside 5'-diphosphate. In terms of biological role, involved in mRNA degradation. Catalyzes the phosphorolysis of single-stranded polyribonucleotides processively in the 3'- to 5'-direction. This is Polyribonucleotide nucleotidyltransferase from Leptospira borgpetersenii serovar Hardjo-bovis (strain L550).